The chain runs to 213 residues: 3-demethoxyubiquinol 3-hydroxylase (213 aa).

Fe cation-binding residues include Glu-62, Glu-92, His-95, Glu-144, Glu-176, and His-179.

This sequence belongs to the COQ7 family. The cofactor is Fe cation.

It localises to the cell membrane. The enzyme catalyses a 5-methoxy-2-methyl-3-(all-trans-polyprenyl)benzene-1,4-diol + AH2 + O2 = a 3-demethylubiquinol + A + H2O. It functions in the pathway cofactor biosynthesis; ubiquinone biosynthesis. Its function is as follows. Catalyzes the hydroxylation of 2-nonaprenyl-3-methyl-6-methoxy-1,4-benzoquinol during ubiquinone biosynthesis. The polypeptide is 3-demethoxyubiquinol 3-hydroxylase (Legionella pneumophila (strain Corby)).